The following is a 1257-amino-acid chain: Bifunctional autolysin (1257 aa).

A signal peptide spans 1-29; it reads MAKKFNYKLPSMVALTLVGSAVTAHQVQA. Residues 99–137 are compositionally biased toward polar residues; it reads QVNGDTRATQSTTSNNAKPVTKSTNTTAPKTNNNVTSAG. Disordered stretches follow at residues 99–150, 173–217, and 417–441; these read QVNG…NSEN, AAPK…KYKP, and TQST…PSTG. Low complexity-rich tracts occupy residues 173–208 and 419–440; these read AAPK…AAAP and STTT…TPST. The tract at residues 197–776 is N-acetylmuramoyl-L-alanine amidase; that stretch reads ASAQPRSAAA…AVAQPKTAVK (580 aa). 7 GW domains span residues 444–518, 520–594, 613–687, 689–763, 785–860, 862–937, and 944–1018; these read TVAA…YNTA, SPVN…DTAK, TVSS…YNNA, SPVN…VPAA, TTQT…VQNL, KEVK…APTA, and AAKD…KELI. The endo-beta-N-acetylglucosaminidase stretch occupies residues 777–1257; that stretch reads AYAVTKPQTT…GKYFDIPQYK (481 aa).

In the N-terminal section; belongs to the N-acetylmuramoyl-L-alanine amidase 2 family. This sequence in the C-terminal section; belongs to the glycosyl hydrolase 73 family. Oligomer; forms a ring structure at the cell surface which is important for efficient partitioning of daughter cells after cell division. In terms of processing, undergoes proteolytic processing to generate the two extracellular lytic enzymes, probably at the septal region on the cell surface.

It is found in the secreted. It catalyses the reaction Hydrolyzes the link between N-acetylmuramoyl residues and L-amino acid residues in certain cell-wall glycopeptides.. It carries out the reaction an N(4)-(oligosaccharide-(1-&gt;3)-[oligosaccharide-(1-&gt;6)]-beta-D-Man-(1-&gt;4)-beta-D-GlcNAc-(1-&gt;4)-alpha-D-GlcNAc)-L-asparaginyl-[protein] + H2O = an oligosaccharide-(1-&gt;3)-[oligosaccharide-(1-&gt;6)]-beta-D-Man-(1-&gt;4)-D-GlcNAc + N(4)-(N-acetyl-beta-D-glucosaminyl)-L-asparaginyl-[protein]. Endohydrolysis of the di-N-acetylchitobiosyl unit in high-mannose glycopeptides and glycoproteins containing the -[(Man)5(GlcNAc)2]-Asn structure. One N-acetyl-D-glucosamine residue remains attached to the protein; the rest of the oligosaccharide is released intact. Cleaves the peptidoglycan connecting the daughter cells at the end of the cell division cycle, resulting in the separation of the two newly divided cells. Acts as an autolysin in penicillin-induced lysis. The chain is Bifunctional autolysin (atl) from Staphylococcus aureus (strain MRSA252).